Here is a 625-residue protein sequence, read N- to C-terminus: 1-deoxy-D-xylulose-5-phosphate synthase (625 aa).

Residues His80 and 121–123 each bind thiamine diphosphate; that span reads GHS. Asp152 provides a ligand contact to Mg(2+). Residues 153–154, Asn181, Tyr290, and Glu371 each bind thiamine diphosphate; that span reads GA. Asn181 serves as a coordination point for Mg(2+).

The protein belongs to the transketolase family. DXPS subfamily. As to quaternary structure, homodimer. Mg(2+) is required as a cofactor. Thiamine diphosphate serves as cofactor.

It catalyses the reaction D-glyceraldehyde 3-phosphate + pyruvate + H(+) = 1-deoxy-D-xylulose 5-phosphate + CO2. Its pathway is metabolic intermediate biosynthesis; 1-deoxy-D-xylulose 5-phosphate biosynthesis; 1-deoxy-D-xylulose 5-phosphate from D-glyceraldehyde 3-phosphate and pyruvate: step 1/1. Its function is as follows. Catalyzes the acyloin condensation reaction between C atoms 2 and 3 of pyruvate and glyceraldehyde 3-phosphate to yield 1-deoxy-D-xylulose-5-phosphate (DXP). The polypeptide is 1-deoxy-D-xylulose-5-phosphate synthase (Haemophilus influenzae (strain ATCC 51907 / DSM 11121 / KW20 / Rd)).